Reading from the N-terminus, the 439-residue chain is Ribosomal protein uS12 methylthiotransferase RimO (439 aa).

The MTTase N-terminal domain occupies 3-118 (KKFYITTLGC…AGKILREKFP (116 aa)). 6 residues coordinate [4Fe-4S] cluster: Cys12, Cys48, Cys81, Cys157, Cys161, and Cys164. The Radical SAM core domain maps to 143–370 (NYSKPYAYVK…RDVHLAILEE (228 aa)). The TRAM domain occupies 373 to 438 (ESRIGQTYDA…EYDMNGTWIS (66 aa)).

This sequence belongs to the methylthiotransferase family. RimO subfamily. It depends on [4Fe-4S] cluster as a cofactor.

It localises to the cytoplasm. It catalyses the reaction L-aspartate(89)-[ribosomal protein uS12]-hydrogen + (sulfur carrier)-SH + AH2 + 2 S-adenosyl-L-methionine = 3-methylsulfanyl-L-aspartate(89)-[ribosomal protein uS12]-hydrogen + (sulfur carrier)-H + 5'-deoxyadenosine + L-methionine + A + S-adenosyl-L-homocysteine + 2 H(+). Its function is as follows. Catalyzes the methylthiolation of an aspartic acid residue of ribosomal protein uS12. This Leptospira borgpetersenii serovar Hardjo-bovis (strain JB197) protein is Ribosomal protein uS12 methylthiotransferase RimO.